We begin with the raw amino-acid sequence, 96 residues long: Large ribosomal subunit protein uL23 (96 aa).

This sequence belongs to the universal ribosomal protein uL23 family. As to quaternary structure, part of the 50S ribosomal subunit. Contacts protein L29, and trigger factor when it is bound to the ribosome.

In terms of biological role, one of the early assembly proteins it binds 23S rRNA. One of the proteins that surrounds the polypeptide exit tunnel on the outside of the ribosome. Forms the main docking site for trigger factor binding to the ribosome. The sequence is that of Large ribosomal subunit protein uL23 from Thermus thermophilus (strain ATCC BAA-163 / DSM 7039 / HB27).